The primary structure comprises 160 residues: Secreted RxLR effector protein RXLR-C11 (160 aa).

Positions 1–19 are cleaved as a signal peptide; the sequence is MHFSLVLLVFAAIVIPICA. The RxLR-dEER motif lies at 58-75; it reads RLLRMNDKAVISDHEEER.

This sequence belongs to the RxLR effector family.

Its subcellular location is the secreted. The protein resides in the host cell membrane. It localises to the host nucleus. In terms of biological role, secreted effector that suppresses pattern-triggered immunity (PTI) in plant host. The protein is Secreted RxLR effector protein RXLR-C11 of Plasmopara halstedii (Downy mildew of sunflower).